A 421-amino-acid polypeptide reads, in one-letter code: Enolase (421 aa).

Glutamine 165 contacts (2R)-2-phosphoglycerate. Catalysis depends on glutamate 207, which acts as the Proton donor. Residues aspartate 244, glutamate 285, and aspartate 312 each coordinate Mg(2+). Positions 337, 366, 367, and 388 each coordinate (2R)-2-phosphoglycerate. Catalysis depends on lysine 337, which acts as the Proton acceptor.

This sequence belongs to the enolase family. Requires Mg(2+) as cofactor.

It is found in the cytoplasm. It localises to the secreted. The protein localises to the cell surface. It catalyses the reaction (2R)-2-phosphoglycerate = phosphoenolpyruvate + H2O. Its pathway is carbohydrate degradation; glycolysis; pyruvate from D-glyceraldehyde 3-phosphate: step 4/5. Catalyzes the reversible conversion of 2-phosphoglycerate (2-PG) into phosphoenolpyruvate (PEP). It is essential for the degradation of carbohydrates via glycolysis. This Ehrlichia chaffeensis (strain ATCC CRL-10679 / Arkansas) protein is Enolase.